The chain runs to 272 residues: 2-amino-3,7-dideoxy-D-threo-hept-6-ulosonate synthase (272 aa).

Residue Asp-33 is the Proton acceptor of the active site. Residues 33–37 (DHGVS) and 153–155 (YPR) each bind 1-deoxy-D-threo-hexo-2,5-diulose 6-phosphate. Residue Tyr-153 is the Proton donor of the active site. The active-site Schiff-base intermediate with substrate is Lys-184. 1-deoxy-D-threo-hexo-2,5-diulose 6-phosphate-binding positions include 209–210 (GG) and 237–238 (GR).

The protein belongs to the DeoC/FbaB aldolase family. ADHS subfamily. In terms of assembly, homodecamer.

The catalysed reaction is 1-deoxy-D-threo-hexo-2,5-diulose 6-phosphate + L-aspartate 4-semialdehyde = 2,3-dioxopropyl phosphate + 2-amino-2,3,7-trideoxy-D-lyxo-hept-6-ulosonate. Functionally, catalyzes a transaldol reaction between 6-deoxy-5-ketofructose 1-phosphate (DKFP) and L-aspartate semialdehyde (ASA) with an elimination of hydroxypyruvaldehyde phosphate to yield 2-amino-3,7-dideoxy-D-threo-hept-6-ulosonate (ADH). Plays a key role in an alternative pathway of the biosynthesis of 3-dehydroquinate (DHQ), which is involved in the canonical pathway for the biosynthesis of aromatic amino acids. The sequence is that of 2-amino-3,7-dideoxy-D-threo-hept-6-ulosonate synthase from Methanococcus vannielii (strain ATCC 35089 / DSM 1224 / JCM 13029 / OCM 148 / SB).